The sequence spans 94 residues: uncharacterized protein (94 aa).

This is an uncharacterized protein from Schizosaccharomyces pombe (strain 972 / ATCC 24843) (Fission yeast).